Here is a 620-residue protein sequence, read N- to C-terminus: Probable translation initiation factor IF-2 (620 aa).

The segment covering 1–10 has biased composition (acidic residues); the sequence is MSDTDADADT. The tract at residues 1-29 is disordered; that stretch reads MSDTDADADTDAVSTTETSMNADANANAD. Low complexity predominate over residues 11 to 29; it reads DAVSTTETSMNADANANAD. A tr-type G domain is found at 33–248; it reads LRTPIVAVLG…VLMGLSQRYM (216 aa). The tract at residues 42–49 is G1; it reads GHVDHGKT. 42 to 49 lines the GTP pocket; the sequence is GHVDHGKT. The interval 67–71 is G2; it reads AITQH. The interval 104–107 is G3; that stretch reads DTPG. Residues 104 to 108 and 158 to 161 each bind GTP; these read DTPGH and NKVD. A G4 region spans residues 158–161; it reads NKVD. A compositionally biased stretch (polar residues) spans 162 to 183; that stretch reads TTPGWTPTDGSPIQPTYESQPS. The tract at residues 162-185 is disordered; it reads TTPGWTPTDGSPIQPTYESQPSAA. The segment at 226–228 is G5; sequence SAI.

The protein belongs to the TRAFAC class translation factor GTPase superfamily. Classic translation factor GTPase family. IF-2 subfamily.

Functionally, function in general translation initiation by promoting the binding of the formylmethionine-tRNA to ribosomes. Seems to function along with eIF-2. The chain is Probable translation initiation factor IF-2 from Haloquadratum walsbyi (strain DSM 16790 / HBSQ001).